Here is a 263-residue protein sequence, read N- to C-terminus: 5'-nucleotidase SurE (263 aa).

The a divalent metal cation site is built by D11, D12, S42, and N96.

Belongs to the SurE nucleotidase family. It depends on a divalent metal cation as a cofactor.

Its subcellular location is the cytoplasm. The enzyme catalyses a ribonucleoside 5'-phosphate + H2O = a ribonucleoside + phosphate. Nucleotidase that shows phosphatase activity on nucleoside 5'-monophosphates. The protein is 5'-nucleotidase SurE of Methanocorpusculum labreanum (strain ATCC 43576 / DSM 4855 / Z).